The primary structure comprises 188 residues: Pyridoxal 5'-phosphate synthase subunit PdxT (188 aa).

47–49 provides a ligand contact to L-glutamine; sequence GES. C79 serves as the catalytic Nucleophile. L-glutamine is bound by residues R105 and 134–135; that span reads IR. Catalysis depends on charge relay system residues H170 and E172.

This sequence belongs to the glutaminase PdxT/SNO family. In terms of assembly, in the presence of PdxS, forms a dodecamer of heterodimers. Only shows activity in the heterodimer.

The catalysed reaction is aldehydo-D-ribose 5-phosphate + D-glyceraldehyde 3-phosphate + L-glutamine = pyridoxal 5'-phosphate + L-glutamate + phosphate + 3 H2O + H(+). It carries out the reaction L-glutamine + H2O = L-glutamate + NH4(+). It functions in the pathway cofactor biosynthesis; pyridoxal 5'-phosphate biosynthesis. In terms of biological role, catalyzes the hydrolysis of glutamine to glutamate and ammonia as part of the biosynthesis of pyridoxal 5'-phosphate. The resulting ammonia molecule is channeled to the active site of PdxS. In Listeria monocytogenes serovar 1/2a (strain ATCC BAA-679 / EGD-e), this protein is Pyridoxal 5'-phosphate synthase subunit PdxT.